Here is a 502-residue protein sequence, read N- to C-terminus: ATP synthase subunit alpha (502 aa).

Residues 115–134 (IDGQGPINTTKTRPVEQKAT) form a disordered region. 169 to 176 (GDRQTGKT) contacts ATP.

This sequence belongs to the ATPase alpha/beta chains family. F-type ATPases have 2 components, CF(1) - the catalytic core - and CF(0) - the membrane proton channel. CF(1) has five subunits: alpha(3), beta(3), gamma(1), delta(1), epsilon(1). CF(0) has three main subunits: a(1), b(2) and c(9-12). The alpha and beta chains form an alternating ring which encloses part of the gamma chain. CF(1) is attached to CF(0) by a central stalk formed by the gamma and epsilon chains, while a peripheral stalk is formed by the delta and b chains.

It localises to the cell membrane. The enzyme catalyses ATP + H2O + 4 H(+)(in) = ADP + phosphate + 5 H(+)(out). In terms of biological role, produces ATP from ADP in the presence of a proton gradient across the membrane. The alpha chain is a regulatory subunit. This is ATP synthase subunit alpha from Staphylococcus haemolyticus (strain JCSC1435).